We begin with the raw amino-acid sequence, 679 residues long: MASKPDDDGFLAPYVSRSDAQRPLSIVSSRMTDIASEDGDGPEVQNNRLSIPQSTDMGSRPDTARTGASSSRGPWQSQSLRNKTYLAGVQAKRGSVESSTAGSTSQPPSLSSRSHVPSLQSHAFFRPMSSQKLQAQRGGSHRPSTMSQMSAAASPSSPTSPTSPTSPRSDEHGESSSSQMRQSIISNPIAQLQRQMSNEENMRPPPSRGTEMTEQETLDRITANTSPSHGHYPAGSLTDSVRPLQGMSSDTGHFQHSIIVDKSYKDLSNLPSPIKTPRSFRSSFLMPGRSNDGQLSQNRSTEGAEKLSSAASSPQFRPVDSHNEQQHPRVPYKPSQKSDLGRVHQYFDGNTVFCLGGRWQNTRGRPINIATGIFVVVPCALFFGFEAPWLWNNVSPAIPIVFAYLAYICFSSFIHASVTDPGILPRNLHQFPPVDDDDDPLQLSPPTTDWALIKSAESTTAAMEVPVKHCRTCNIWRPPRAHHCRLCDNCIETHDHHCVWLNNCVGKRNYRYFFTFVTSATVLAAYLIATSLTQILLYRNRQGISFGQAVDHFRVPFALVFLGFITFLYPAALMGYHIFLMARGETTREYMNSHKFAKKERFRAFSQASVFKNFIVVLCRPRQPTYYQFKAHYHEGDQRLGIRRDKRPRSSSQGLEMHDVNPGSSGFQGPVSLRNDTPH.

Disordered regions lie at residues 1 to 181 (MASK…SQMR), 194 to 250 (RQMS…MSSD), and 267 to 338 (LSNL…SQKS). The Cytoplasmic portion of the chain corresponds to 1-368 (MASKPDDDGF…WQNTRGRPIN (368 aa)). Composition is skewed to polar residues over residues 44–57 (VQNN…STDM) and 66–82 (TGAS…SLRN). Low complexity-rich tracts occupy residues 103 to 114 (STSQPPSLSSRS) and 143 to 167 (PSTM…PTSP). The span at 291–301 (NDGQLSQNRST) shows a compositional bias: polar residues. A helical transmembrane segment spans residues 369-389 (IATGIFVVVPCALFFGFEAPW). At 390 to 393 (LWNN) the chain is on the lumenal side. A helical membrane pass occupies residues 394–414 (VSPAIPIVFAYLAYICFSSFI). Over 415 to 511 (HASVTDPGIL…NNCVGKRNYR (97 aa)) the chain is Cytoplasmic. Residues 468-518 (KHCRTCNIWRPPRAHHCRLCDNCIETHDHHCVWLNNCVGKRNYRYFFTFVT) enclose the DHHC domain. Cys-498 acts as the S-palmitoyl cysteine intermediate in catalysis. The chain crosses the membrane as a helical span at residues 512–532 (YFFTFVTSATVLAAYLIATSL). Residues 533 to 554 (TQILLYRNRQGISFGQAVDHFR) are Lumenal-facing. The helical transmembrane segment at 555–575 (VPFALVFLGFITFLYPAALMG) threads the bilayer. Over 576–679 (YHIFLMARGE…PVSLRNDTPH (104 aa)) the chain is Cytoplasmic. The interval 640–679 (LGIRRDKRPRSSSQGLEMHDVNPGSSGFQGPVSLRNDTPH) is disordered.

Belongs to the DHHC palmitoyltransferase family. ERF2/ZDHHC9 subfamily. In terms of processing, autopalmitoylated.

The protein resides in the endoplasmic reticulum membrane. It carries out the reaction L-cysteinyl-[protein] + hexadecanoyl-CoA = S-hexadecanoyl-L-cysteinyl-[protein] + CoA. Functionally, palmitoyltransferase specific for Ras proteins. The sequence is that of Palmitoyltransferase ERF2 (ERF2) from Gibberella zeae (strain ATCC MYA-4620 / CBS 123657 / FGSC 9075 / NRRL 31084 / PH-1) (Wheat head blight fungus).